A 116-amino-acid chain; its full sequence is Sperm mitochondrial-associated cysteine-rich protein (116 aa).

7 tandem repeats follow at residues 6–13, 14–21, 30–37, 38–45, 46–53, 54–61, and 62–68. Residues 6 to 68 are 7 X 7 (OR 8) AA approximate repeats; it reads KHSKCCPAKG…CQPKPPCCIQ (63 aa). The tract at residues 80 to 116 is disordered; it reads VSPLNMESEPNSPQTQDKGCQTQQQPHSPQNESRPSK. The segment covering 93–104 has biased composition (low complexity); sequence QTQDKGCQTQQQ. A compositionally biased stretch (polar residues) spans 105 to 116; sequence PHSPQNESRPSK.

Testis. Is selectively expressed in the spermatids of seminiferous tubules.

The protein resides in the cytoplasm. It is found in the mitochondrion membrane. Functionally, involved in sperm motility. Its absence is associated with genetic background dependent male infertility. Infertility may be due to reduced sperm motility in the female reproductive tract and inability to penetrate the oocyte zona pellucida. The sequence is that of Sperm mitochondrial-associated cysteine-rich protein (SMCP) from Homo sapiens (Human).